A 173-amino-acid chain; its full sequence is ATP synthase subunit b (173 aa).

A helical transmembrane segment spans residues 15–35; it reads GVEWGTVIVQVLTFIVLLALL.

This sequence belongs to the ATPase B chain family. F-type ATPases have 2 components, F(1) - the catalytic core - and F(0) - the membrane proton channel. F(1) has five subunits: alpha(3), beta(3), gamma(1), delta(1), epsilon(1). F(0) has three main subunits: a(1), b(2) and c(10-14). The alpha and beta chains form an alternating ring which encloses part of the gamma chain. F(1) is attached to F(0) by a central stalk formed by the gamma and epsilon chains, while a peripheral stalk is formed by the delta and b chains.

It is found in the cell membrane. In terms of biological role, f(1)F(0) ATP synthase produces ATP from ADP in the presence of a proton or sodium gradient. F-type ATPases consist of two structural domains, F(1) containing the extramembraneous catalytic core and F(0) containing the membrane proton channel, linked together by a central stalk and a peripheral stalk. During catalysis, ATP synthesis in the catalytic domain of F(1) is coupled via a rotary mechanism of the central stalk subunits to proton translocation. Functionally, component of the F(0) channel, it forms part of the peripheral stalk, linking F(1) to F(0). The protein is ATP synthase subunit b of Staphylococcus aureus (strain MSSA476).